Consider the following 196-residue polypeptide: MDALIMAGGKGTRMGGVEKPLIKLCGRCLIDYVVSPLLKSKVNNIFIATSPNTPKTKEYINSAYKDYKNIVVIDTSGKGYIEDLNECIGYFSEPFLVVSSDLINLKSKIINSIVDYFYCIKAKTPDVEALAVMIPKEKYPNPSIDFNGLVPAGINVVSPKHGYQKEEIMVIDELIFNINTKDDLKLAEMLLKKDGL.

In terms of assembly, homodimer.

The enzyme catalyses adenosylcob(III)inamide phosphate + GTP + H(+) = adenosylcob(III)inamide-GDP + diphosphate. It participates in cofactor biosynthesis; adenosylcobalamin biosynthesis. In terms of biological role, guanylyltransferase that catalyzes the synthesis of adenosylcobinamide-GDP (AdoCbi-GDP) from adenosylcobinamide-phosphate (AdoCbi-P) and GTP. Is involved in adenosylcobalamin biosynthesis. Binds one GTP per dimer. Cannot use other NTPs or GDP. Does not display AdoCbi kinase activity. Is also able to catalyze the condensation of 2-phospho-L-lactate (LP) with GTP in vitro to form PPi and (2S)-lactyl-2-diphospho-5'-guanosine (LPPG), but is much less efficient than CofC, the presumed enzyme catalyzing this reaction in vivo. The chain is Adenosylcobinamide-phosphate guanylyltransferase (cobY) from Methanocaldococcus jannaschii (strain ATCC 43067 / DSM 2661 / JAL-1 / JCM 10045 / NBRC 100440) (Methanococcus jannaschii).